A 317-amino-acid polypeptide reads, in one-letter code: Melanocyte-stimulating hormone receptor (317 aa).

Residues 1-37 are Extracellular-facing; sequence MPLQGPQRRLLGSLNSTLPATPYLGLTTNQTEPPCLE. A glycan (N-linked (GlcNAc...) asparagine) is linked at Asn-29. Residues 38–63 form a helical membrane-spanning segment; sequence VSIPDGLFLSLGLVSLVENVLVVTAI. The Cytoplasmic segment spans residues 64–72; sequence AKNRNLHSP. The helical transmembrane segment at 73-93 threads the bilayer; the sequence is MYYFICCLAVSDLLVSMSNVL. Residues 94–118 lie on the Extracellular side of the membrane; the sequence is EMAILLLLEAGVLATQASVLQQLDN. Residues 119-140 traverse the membrane as a helical segment; the sequence is IIDVLICGSMVSSLCFLGSIAV. The Cytoplasmic portion of the chain corresponds to 141–163; that stretch reads DRYISIFYALRYHSIMMLPRVWR. A helical membrane pass occupies residues 164-183; it reads AIVAIWVVSVLSSTLFIAYY. Residues 184-191 lie on the Extracellular side of the membrane; the sequence is NHTAVLLC. A helical transmembrane segment spans residues 192–211; the sequence is LVTFFVAMLVLMAVLYVHML. Over 212-240 the chain is Cytoplasmic; it reads ARACQHARGIARLHKRQHPIHQGFGLKGA. A helical membrane pass occupies residues 241-266; it reads ATLTILLGVFFLCWGPFFLHLSLLIL. Residues 267–279 are Extracellular-facing; it reads CPQHPTCGCVFKN. Residues 280 to 300 traverse the membrane as a helical segment; sequence FKLFLTLILCSAIVDPLIYAF. Over 301 to 317 the chain is Cytoplasmic; sequence RSQELRKTLQEVLLCSW. Cys-315 carries the S-palmitoyl cysteine lipid modification.

The protein belongs to the G-protein coupled receptor 1 family. Interacts with MGRN1, but does not undergo MGRN1-mediated ubiquitination; this interaction competes with GNAS-binding and thus inhibits agonist-induced cAMP production. Interacts with OPN3; the interaction results in a decrease in MC1R-mediated cAMP signaling and ultimately a decrease in melanin production in melanocytes.

The protein resides in the cell membrane. Its function is as follows. Receptor for MSH (alpha, beta and gamma) and ACTH. The activity of this receptor is mediated by G proteins which activate adenylate cyclase. Mediates melanogenesis, the production of eumelanin (black/brown) and phaeomelanin (red/yellow), via regulation of cAMP signaling in melanocytes. This chain is Melanocyte-stimulating hormone receptor (MC1R), found in Equus caballus (Horse).